The chain runs to 278 residues: Splicing factor YJU2 (278 aa).

Positions 51, 54, 88, and 91 each coordinate Zn(2+). The disordered stretch occupies residues 228 to 278 (HRQRTNKPGNNNDEKRTPLFNPTSTKGKIQKKSSVRTNPLGIVIKRGKSLK). 2 consecutive short sequence motifs (nuclear localization signal) follow at residues 242-258 (KRTPLFNPTSTKGKIQK) and 260-278 (SSVRTNPLGIVIKRGKSLK).

It belongs to the CWC16 family. YJU2 subfamily. Component of the spliceosome. Present in the activated B complex, the catalytically activated B* complex which catalyzes the branching, the catalytic step 1 C complex catalyzing the exon ligation, and the postcatalytic P complex containing the ligated exons (mRNA) and the excised lariat intron. Interacts (via C-terminus) with CLF1. Interacts (via N-terminus) with SYF1. Interacts with U2 snRNA; this interaction is direct. Identified in the CWC complex (or CEF1-associated complex), a spliceosome sub-complex reminiscent of a late-stage spliceosome composed of the U2, U5 and U6 snRNAs and at least BUD13, BUD31, BRR2, CDC40, CEF1, CLF1, CUS1, CWC2, CWC15, CWC21, CWC22, CWC23, CWC24, CWC25, CWC27, ECM2, HSH155, IST3, ISY1, LEA1, MSL1, NTC20, PRP8, PRP9, PRP11, PRP19, PRP21, PRP22, PRP45, PRP46, SLU7, SMB1, SMD1, SMD2, SMD3, SMX2, SMX3, SNT309, SNU114, SPP2, SYF1, SYF2, RSE1 and YJU2.

The protein localises to the nucleus. In terms of biological role, part of the spliceosome which catalyzes two sequential transesterification reactions, first the excision of the non-coding intron from pre-mRNA and then the ligation of the coding exons to form the mature mRNA. Plays a role (via N-terminus) in stabilizing the structure of the spliceosome catalytic core and docking of the branch helix into the active site, producing 5'-exon and lariat intron-3'-intermediates. Further stabilizes spliceosome conformation for 3'-splice site docking (via C-terminus) promoting exon ligation. This Saccharomyces cerevisiae (strain ATCC 204508 / S288c) (Baker's yeast) protein is Splicing factor YJU2.